We begin with the raw amino-acid sequence, 417 residues long: Serine hydroxymethyltransferase (417 aa).

(6S)-5,6,7,8-tetrahydrofolate contacts are provided by residues L122 and 126–128 (GHL). Residue K230 is modified to N6-(pyridoxal phosphate)lysine. 355 to 357 (SPF) serves as a coordination point for (6S)-5,6,7,8-tetrahydrofolate.

Belongs to the SHMT family. Homodimer. Requires pyridoxal 5'-phosphate as cofactor.

The protein resides in the cytoplasm. The catalysed reaction is (6R)-5,10-methylene-5,6,7,8-tetrahydrofolate + glycine + H2O = (6S)-5,6,7,8-tetrahydrofolate + L-serine. It participates in one-carbon metabolism; tetrahydrofolate interconversion. Its pathway is amino-acid biosynthesis; glycine biosynthesis; glycine from L-serine: step 1/1. In terms of biological role, catalyzes the reversible interconversion of serine and glycine with tetrahydrofolate (THF) serving as the one-carbon carrier. This reaction serves as the major source of one-carbon groups required for the biosynthesis of purines, thymidylate, methionine, and other important biomolecules. Also exhibits THF-independent aldolase activity toward beta-hydroxyamino acids, producing glycine and aldehydes, via a retro-aldol mechanism. The polypeptide is Serine hydroxymethyltransferase (Francisella philomiragia subsp. philomiragia (strain ATCC 25017 / CCUG 19701 / FSC 153 / O#319-036)).